The chain runs to 339 residues: Ketol-acid reductoisomerase (NADP(+)) (339 aa).

Positions 1–182 constitute a KARI N-terminal Rossmann domain; it reads MRVYYDRDAD…GGGRAGVIET (182 aa). NADP(+) contacts are provided by residues 24–27, R48, S51, T53, and 83–86; these read YGSQ and DELQ. The active site involves H108. Residue G134 coordinates NADP(+). One can recognise a KARI C-terminal knotted domain in the interval 183-328; the sequence is TFKEECETDL…KKLRSMMPWI (146 aa). D191, E195, E227, and E231 together coordinate Mg(2+). S252 contacts substrate.

Belongs to the ketol-acid reductoisomerase family. Mg(2+) serves as cofactor.

It catalyses the reaction (2R)-2,3-dihydroxy-3-methylbutanoate + NADP(+) = (2S)-2-acetolactate + NADPH + H(+). It carries out the reaction (2R,3R)-2,3-dihydroxy-3-methylpentanoate + NADP(+) = (S)-2-ethyl-2-hydroxy-3-oxobutanoate + NADPH + H(+). Its pathway is amino-acid biosynthesis; L-isoleucine biosynthesis; L-isoleucine from 2-oxobutanoate: step 2/4. It functions in the pathway amino-acid biosynthesis; L-valine biosynthesis; L-valine from pyruvate: step 2/4. In terms of biological role, involved in the biosynthesis of branched-chain amino acids (BCAA). Catalyzes an alkyl-migration followed by a ketol-acid reduction of (S)-2-acetolactate (S2AL) to yield (R)-2,3-dihydroxy-isovalerate. In the isomerase reaction, S2AL is rearranged via a Mg-dependent methyl migration to produce 3-hydroxy-3-methyl-2-ketobutyrate (HMKB). In the reductase reaction, this 2-ketoacid undergoes a metal-dependent reduction by NADPH to yield (R)-2,3-dihydroxy-isovalerate. The chain is Ketol-acid reductoisomerase (NADP(+)) from Bartonella tribocorum (strain CIP 105476 / IBS 506).